The primary structure comprises 181 residues: CDP-archaeol synthase (181 aa).

A run of 5 helical transmembrane segments spans residues 7–27 (VVWA…AVLA), 55–75 (LIGT…TPSV), 88–108 (LRAG…ASFL), 126–146 (LDFV…WFTE), and 147–167 (TFTL…HVVT).

Belongs to the CDP-archaeol synthase family. Requires Mg(2+) as cofactor.

The protein resides in the cell membrane. The enzyme catalyses 2,3-bis-O-(geranylgeranyl)-sn-glycerol 1-phosphate + CTP + H(+) = CDP-2,3-bis-O-(geranylgeranyl)-sn-glycerol + diphosphate. The protein operates within membrane lipid metabolism; glycerophospholipid metabolism. Catalyzes the formation of CDP-2,3-bis-(O-geranylgeranyl)-sn-glycerol (CDP-archaeol) from 2,3-bis-(O-geranylgeranyl)-sn-glycerol 1-phosphate (DGGGP) and CTP. This reaction is the third ether-bond-formation step in the biosynthesis of archaeal membrane lipids. This is CDP-archaeol synthase from Haloarcula marismortui (strain ATCC 43049 / DSM 3752 / JCM 8966 / VKM B-1809) (Halobacterium marismortui).